Consider the following 357-residue polypeptide: UDP-N-acetylglucosamine--N-acetylmuramyl-(pentapeptide) pyrophosphoryl-undecaprenol N-acetylglucosamine transferase (357 aa).

UDP-N-acetyl-alpha-D-glucosamine contacts are provided by residues 13-15 (TGG), Asn122, Arg163, Ser191, and Gln288.

It belongs to the glycosyltransferase 28 family. MurG subfamily.

It localises to the cell inner membrane. The catalysed reaction is di-trans,octa-cis-undecaprenyl diphospho-N-acetyl-alpha-D-muramoyl-L-alanyl-D-glutamyl-meso-2,6-diaminopimeloyl-D-alanyl-D-alanine + UDP-N-acetyl-alpha-D-glucosamine = di-trans,octa-cis-undecaprenyl diphospho-[N-acetyl-alpha-D-glucosaminyl-(1-&gt;4)]-N-acetyl-alpha-D-muramoyl-L-alanyl-D-glutamyl-meso-2,6-diaminopimeloyl-D-alanyl-D-alanine + UDP + H(+). It participates in cell wall biogenesis; peptidoglycan biosynthesis. Its function is as follows. Cell wall formation. Catalyzes the transfer of a GlcNAc subunit on undecaprenyl-pyrophosphoryl-MurNAc-pentapeptide (lipid intermediate I) to form undecaprenyl-pyrophosphoryl-MurNAc-(pentapeptide)GlcNAc (lipid intermediate II). This chain is UDP-N-acetylglucosamine--N-acetylmuramyl-(pentapeptide) pyrophosphoryl-undecaprenol N-acetylglucosamine transferase, found in Gloeobacter violaceus (strain ATCC 29082 / PCC 7421).